The chain runs to 301 residues: UDP-N-acetylenolpyruvoylglucosamine reductase (301 aa).

The FAD-binding PCMH-type domain occupies 24–190; it reads RVGGLAQFYD…VSAQLQLQPG (167 aa). The active site involves Arg-169. The Proton donor role is filled by Ser-220. Residue Glu-290 is part of the active site.

Belongs to the MurB family. It depends on FAD as a cofactor.

The protein resides in the cytoplasm. The enzyme catalyses UDP-N-acetyl-alpha-D-muramate + NADP(+) = UDP-N-acetyl-3-O-(1-carboxyvinyl)-alpha-D-glucosamine + NADPH + H(+). It functions in the pathway cell wall biogenesis; peptidoglycan biosynthesis. In terms of biological role, cell wall formation. This chain is UDP-N-acetylenolpyruvoylglucosamine reductase, found in Synechococcus sp. (strain ATCC 27144 / PCC 6301 / SAUG 1402/1) (Anacystis nidulans).